Here is a 233-residue protein sequence, read N- to C-terminus: ATP synthase subunit a, chloroplastic (233 aa).

The next 4 membrane-spanning stretches (helical) occupy residues 27–47 (VLLITWLVLAIILTLAILGTL), 84–104 (VPFVGTLFLFIFVANWLGALI), 122–142 (DINTTVALSLLTSISYFYAGF), and 192–212 (VLCLLVPLLIPLPVMVLGIFA).

The protein belongs to the ATPase A chain family. In terms of assembly, F-type ATPases have 2 components, CF(1) - the catalytic core - and CF(0) - the membrane proton channel. CF(1) has five subunits: alpha(3), beta(3), gamma(1), delta(1), epsilon(1). CF(0) has four main subunits: a, b, b' and c.

It is found in the plastid. It localises to the chloroplast thylakoid membrane. Its function is as follows. Key component of the proton channel; it plays a direct role in the translocation of protons across the membrane. This chain is ATP synthase subunit a, chloroplastic, found in Ochrosphaera neapolitana.